Here is a 155-residue protein sequence, read N- to C-terminus: RxLR effector protein 24 (155 aa).

The N-terminal stretch at 1–21 is a signal peptide; sequence MRLLIWVLFVTLVTFVSNTTA. Positions 52 to 78 match the RxLR-dEER motif; that stretch reads RFLRTESKNDLKSDADTNGIDIEDEER. The RABA-binding domain stretch occupies residues 105 to 155; sequence EKAFQRMNQKGETPTTLAKRLDIGKTAEKRFEKTYEKYTAWWINHHTNAGT.

Belongs to the RxLR effector family. Interacts with Arabidopsis thaliana RABA GTPases including RABA1a, RABA1b, RABA1c, RABA1d, RABA1f, RABA2a, RABA2c, RABA2d, RABA4a, RABA4b and RABA4c.

The protein localises to the secreted. The protein resides in the host cell membrane. It localises to the host endomembrane system. Effector protein that contributes to pathogen virulence. Targets members of the RABA GTPases subfamily to inhibit vesicular secretion, leading to an accumulation of secretory proteins in the endoplasmic reticulum. The chain is RxLR effector protein 24 from Phytophthora brassicae.